The chain runs to 224 residues: Processed variable antigen (224 aa).

17 tandem repeats follow at residues 1-6 (ETGESK), 7-12 (ETGESK), 13-18 (ETGESK), 19-24 (ETGESK), 25-30 (ETGESK), 31-36 (ETGESK), 37-42 (ETGESK), 43-48 (ETGESK), 49-54 (ETGESK), 55-60 (ETGESK), 61-66 (ETGESK), 67-72 (ETGESK), 73-78 (ETGESK), 79-84 (ETGESK), 85-90 (ETGESK), 91-96 (ETGESK), and 97-102 (ETGESK). A 17 X 6 AA tandem repeats of E-T-G-E-S-K region spans residues 1-102 (ETGESKETGE…GESKETGESK (102 aa)). A compositionally biased stretch (basic and acidic residues) spans 1–137 (ETGESKETGE…TEESKDREGN (137 aa)). Residues 1–224 (ETGESKETGE…KKADNKKKKK (224 aa)) are disordered. The span at 144 to 153 (ENSENSNVTS) shows a compositional bias: low complexity. Basic and acidic residues-rich tracts occupy residues 156–173 (EETK…EKLG) and 185–217 (EDPK…EKKA).

In Plasmodium falciparum, this protein is Processed variable antigen.